A 408-amino-acid polypeptide reads, in one-letter code: MQIYKVGGAVRDRLLGQPVTDIDWVVVGASTEDMLIKGYRPVGTDFPVFLHPLTNEEYALARTERKSGVGYGGFVFHASPEVTLEQDLIRRDLTINAMAEDKDGNLTDPYNGQKDLQARILRHVSPAFAEDPLRVLRVARFAARYAGYGFTIAPETLGLMRQLSASGELKALTAERSWKEISRALMEEQPQVFIQVLHDCGALKELMPEVEALFGVPQPAAHHPEIDTGVHVLSVLEQSARHKHPLTVRWACLLHDLGKGLTPEAEWPRHIAHEHTGLRLIKAVNERFRVPRDCQELALLVGQYHTHGHRALELKPSTLLELLQSFDVYRRPQRFEEFIAACEMDARGRHGFEQRSYPQADYLRGAAEAARAVSVQPLLEQGLKGKELGDALKNERLKALKTYKTSTV.

Positions 8 and 11 each coordinate ATP. Residues glycine 8 and arginine 11 each contribute to the CTP site. Positions 21 and 23 each coordinate Mg(2+). Arginine 91, arginine 137, and arginine 140 together coordinate ATP. Positions 91, 137, and 140 each coordinate CTP. The 102-residue stretch at 228–329 (TGVHVLSVLE…LELLQSFDVY (102 aa)) folds into the HD domain.

This sequence belongs to the tRNA nucleotidyltransferase/poly(A) polymerase family. Bacterial CCA-adding enzyme type 1 subfamily. As to quaternary structure, monomer. Can also form homodimers and oligomers. Mg(2+) serves as cofactor. It depends on Ni(2+) as a cofactor.

The enzyme catalyses a tRNA precursor + 2 CTP + ATP = a tRNA with a 3' CCA end + 3 diphosphate. The catalysed reaction is a tRNA with a 3' CCA end + 2 CTP + ATP = a tRNA with a 3' CCACCA end + 3 diphosphate. Functionally, catalyzes the addition and repair of the essential 3'-terminal CCA sequence in tRNAs without using a nucleic acid template. Adds these three nucleotides in the order of C, C, and A to the tRNA nucleotide-73, using CTP and ATP as substrates and producing inorganic pyrophosphate. tRNA 3'-terminal CCA addition is required both for tRNA processing and repair. Also involved in tRNA surveillance by mediating tandem CCA addition to generate a CCACCA at the 3' terminus of unstable tRNAs. While stable tRNAs receive only 3'-terminal CCA, unstable tRNAs are marked with CCACCA and rapidly degraded. The protein is Multifunctional CCA protein of Pseudomonas syringae pv. syringae (strain B728a).